A 240-amino-acid polypeptide reads, in one-letter code: Large ribosomal subunit protein bL25 (240 aa).

2 disordered regions span residues 1–21 (MAEN…PARR) and 204–240 (GAAP…KAKK). A compositionally biased stretch (low complexity) spans 204–229 (GAAPAAGAAAPAGGAAPAAGAAPAKG). A compositionally biased stretch (basic and acidic residues) spans 230-240 (GEAKGGDKAKK).

It belongs to the bacterial ribosomal protein bL25 family. CTC subfamily. As to quaternary structure, part of the 50S ribosomal subunit; part of the 5S rRNA/L5/L18/L25 subcomplex. Contacts the 5S rRNA. Binds to the 5S rRNA independently of L5 and L18.

This is one of the proteins that binds to the 5S RNA in the ribosome where it forms part of the central protuberance. This chain is Large ribosomal subunit protein bL25, found in Anaeromyxobacter dehalogenans (strain 2CP-1 / ATCC BAA-258).